A 1112-amino-acid polypeptide reads, in one-letter code: Lysylphosphatidylglycerol biosynthesis bifunctional protein LysX (1112 aa).

The phosphatidylglycerol lysyltransferase stretch occupies residues 1–613 (MTLTSPPRTR…VLHHDGTAPD (613 aa)). The next 7 helical transmembrane spans lie at 18–38 (VPAAAGWTVGVIATLSLIASV), 60–80 (FPDTSFAWAFVLALLAGALAA), 84–104 (IAWWILLLYMVAAAGWNVADL), 118–138 (VIGLAFHLAAVAFLLLARPLF), 152–172 (GVLAAGMAVGVLVGWGLLELF), 209–229 (VNALLGLFGALALMAAAIVLF), and 308–328 (AWLALCGTYGWAPGVMGASVG). Residues 614-1112 (MSGLRTDTAD…TLPFPLARPR (499 aa)) are lysine--tRNA ligase. The OB DNA-binding region spans 675–748 (VAGRVLRIRD…GTRSLLVRHW (74 aa)). Mg(2+) contacts are provided by D1024 and E1031.

In the N-terminal section; belongs to the LPG synthetase family. It in the C-terminal section; belongs to the class-II aminoacyl-tRNA synthetase family. Mg(2+) is required as a cofactor.

It is found in the cell membrane. It catalyses the reaction tRNA(Lys) + L-lysine + ATP = L-lysyl-tRNA(Lys) + AMP + diphosphate. It carries out the reaction L-lysyl-tRNA(Lys) + a 1,2-diacyl-sn-glycero-3-phospho-(1'-sn-glycerol) = a 1,2-diacyl-sn-glycero-3-phospho-1'-(3'-O-L-lysyl)-sn-glycerol + tRNA(Lys). In terms of biological role, catalyzes the production of L-lysyl-tRNA(Lys)transfer and the transfer of a lysyl group from L-lysyl-tRNA(Lys) to membrane-bound phosphatidylglycerol (PG), which produces lysylphosphatidylglycerol (LPG), one of the components of the bacterial membrane with a positive net charge. LPG synthesis contributes to the resistance to cationic antimicrobial peptides (CAMPs) and likely protects M.tuberculosis against the CAMPs produced by competiting microorganisms (bacteriocins). In fact, the modification of anionic phosphatidylglycerol with positively charged L-lysine results in repulsion of the peptides. This chain is Lysylphosphatidylglycerol biosynthesis bifunctional protein LysX (lysX), found in Mycobacterium sp. (strain KMS).